Reading from the N-terminus, the 155-residue chain is Ribosomal RNA large subunit methyltransferase H (155 aa).

An S-adenosyl-L-methionine-binding site is contributed by G103.

Belongs to the RNA methyltransferase RlmH family. Homodimer.

Its subcellular location is the cytoplasm. It catalyses the reaction pseudouridine(1915) in 23S rRNA + S-adenosyl-L-methionine = N(3)-methylpseudouridine(1915) in 23S rRNA + S-adenosyl-L-homocysteine + H(+). Functionally, specifically methylates the pseudouridine at position 1915 (m3Psi1915) in 23S rRNA. In Caulobacter vibrioides (strain ATCC 19089 / CIP 103742 / CB 15) (Caulobacter crescentus), this protein is Ribosomal RNA large subunit methyltransferase H.